A 297-amino-acid polypeptide reads, in one-letter code: N-acetylneuraminate lyase (297 aa).

Aceneuramate-binding residues include Ser47 and Thr48. The Proton donor role is filled by Tyr137. Lys165 serves as the catalytic Schiff-base intermediate with substrate. Aceneuramate contacts are provided by Thr167, Gly189, Asp191, Glu192, and Ser208.

The protein belongs to the DapA family. NanA subfamily. Homotetramer.

It is found in the cytoplasm. It catalyses the reaction aceneuramate = aldehydo-N-acetyl-D-mannosamine + pyruvate. It functions in the pathway amino-sugar metabolism; N-acetylneuraminate degradation; D-fructose 6-phosphate from N-acetylneuraminate: step 1/5. Its function is as follows. Catalyzes the reversible aldol cleavage of N-acetylneuraminic acid (sialic acid; Neu5Ac) to form pyruvate and N-acetylmannosamine (ManNAc) via a Schiff base intermediate. The chain is N-acetylneuraminate lyase from Escherichia fergusonii (strain ATCC 35469 / DSM 13698 / CCUG 18766 / IAM 14443 / JCM 21226 / LMG 7866 / NBRC 102419 / NCTC 12128 / CDC 0568-73).